Reading from the N-terminus, the 369-residue chain is Dihydroorotate dehydrogenase (quinone) (369 aa).

Residues 76-80 (AGLDK) and threonine 100 contribute to the FMN site. A substrate-binding site is contributed by lysine 80. 125–129 (NRMGF) provides a ligand contact to substrate. 2 residues coordinate FMN: asparagine 154 and asparagine 187. Asparagine 187 serves as a coordination point for substrate. Serine 190 functions as the Nucleophile in the catalytic mechanism. Asparagine 192 lines the substrate pocket. FMN-binding residues include lysine 232 and serine 260. 261–262 (NT) contributes to the substrate binding site. FMN is bound by residues glycine 282, glycine 311, and 332 to 333 (YS).

This sequence belongs to the dihydroorotate dehydrogenase family. Type 2 subfamily. In terms of assembly, monomer. Requires FMN as cofactor.

The protein resides in the cell membrane. The catalysed reaction is (S)-dihydroorotate + a quinone = orotate + a quinol. Its pathway is pyrimidine metabolism; UMP biosynthesis via de novo pathway; orotate from (S)-dihydroorotate (quinone route): step 1/1. Catalyzes the conversion of dihydroorotate to orotate with quinone as electron acceptor. This chain is Dihydroorotate dehydrogenase (quinone) (pyrD), found in Deinococcus radiodurans (strain ATCC 13939 / DSM 20539 / JCM 16871 / CCUG 27074 / LMG 4051 / NBRC 15346 / NCIMB 9279 / VKM B-1422 / R1).